The sequence spans 681 residues: Chaperone protein HtpG (681 aa).

The a; substrate-binding stretch occupies residues 1 to 326 (MQKGNIGVTT…SPDIPLNVSR (326 aa)). The b stretch occupies residues 327–545 (SYLQSDSNVK…YMRRMKEMAN (219 aa)). Residues 546-681 (IQAGMSFYGE…NFVKRSIELI (136 aa)) are c. A disordered region spans residues 589-620 (IQTEMNSVSKRRNELKDSQKDKKEEDIPTAEK). The segment covering 599–620 (RRNELKDSQKDKKEEDIPTAEK) has biased composition (basic and acidic residues).

It belongs to the heat shock protein 90 family. Homodimer.

The protein localises to the cytoplasm. Molecular chaperone. Has ATPase activity. This is Chaperone protein HtpG from Bacteroides thetaiotaomicron (strain ATCC 29148 / DSM 2079 / JCM 5827 / CCUG 10774 / NCTC 10582 / VPI-5482 / E50).